Reading from the N-terminus, the 183-residue chain is MPPIIKRRVMRKIIIASQNPAKVNAVRSAFSTVFPDQEWEFIGVSVPSEVADQPMSDEETKQGALNRVRNAKQRHPGAEYYVGLEAGIEENKTFAWMIVESDQQRGESRSACLMLPPLVLERLRQAKELGDVMDEVFGTENIKQKGGAIGLLTRHHLTRSTVYHQALILALIPFINPEHYPSA.

It belongs to the YjjX NTPase family. As to quaternary structure, homodimer. It depends on Mg(2+) as a cofactor. Mn(2+) serves as cofactor.

It carries out the reaction XTP + H2O = XDP + phosphate + H(+). The enzyme catalyses ITP + H2O = IDP + phosphate + H(+). Functionally, phosphatase that hydrolyzes non-canonical purine nucleotides such as XTP and ITP to their respective diphosphate derivatives. Probably excludes non-canonical purines from DNA/RNA precursor pool, thus preventing their incorporation into DNA/RNA and avoiding chromosomal lesions. The polypeptide is Inosine/xanthosine triphosphatase (Vibrio cholerae serotype O1 (strain ATCC 39315 / El Tor Inaba N16961)).